A 366-amino-acid chain; its full sequence is A-type ATP synthase subunit C (366 aa).

Belongs to the V-ATPase V0D/AC39 subunit family. In terms of assembly, has multiple subunits with at least A(3), B(3), C, D, E, F, H, I and proteolipid K(x).

Its subcellular location is the cell membrane. Its function is as follows. Component of the A-type ATP synthase that produces ATP from ADP in the presence of a proton gradient across the membrane. The chain is A-type ATP synthase subunit C from Thermococcus onnurineus (strain NA1).